The sequence spans 66 residues: Early E3 7.7 kDa protein (66 aa).

N-linked (GlcNAc...) asparagine; by host glycans are attached at residues Asn7 and Asn24. The helical transmembrane segment at 44–64 (ITILIVIGILILSVILYFLFS) threads the bilayer.

It localises to the host nucleus membrane. In Human adenovirus B serotype 7 (HAdV-7), this protein is Early E3 7.7 kDa protein.